A 126-amino-acid polypeptide reads, in one-letter code: Aspartate 1-decarboxylase (126 aa).

The active-site Schiff-base intermediate with substrate; via pyruvic acid is Ser-25. The residue at position 25 (Ser-25) is a Pyruvic acid (Ser). Thr-57 contributes to the substrate binding site. Tyr-58 (proton donor) is an active-site residue. Residue 73 to 75 coordinates substrate; the sequence is GAA.

It belongs to the PanD family. Heterooctamer of four alpha and four beta subunits. It depends on pyruvate as a cofactor. Is synthesized initially as an inactive proenzyme, which is activated by self-cleavage at a specific serine bond to produce a beta-subunit with a hydroxyl group at its C-terminus and an alpha-subunit with a pyruvoyl group at its N-terminus.

Its subcellular location is the cytoplasm. The enzyme catalyses L-aspartate + H(+) = beta-alanine + CO2. The protein operates within cofactor biosynthesis; (R)-pantothenate biosynthesis; beta-alanine from L-aspartate: step 1/1. Catalyzes the pyruvoyl-dependent decarboxylation of aspartate to produce beta-alanine. This chain is Aspartate 1-decarboxylase, found in Marinomonas sp. (strain MWYL1).